The sequence spans 383 residues: Chaperone protein DnaJ (383 aa).

Positions 5–70 constitute a J domain; that stretch reads DYYEALGVAR…QKRAAYDQFG (66 aa). The CR-type zinc finger occupies 139–217; that stretch reads GTEVQIRVPT…CGGRGRVQSQ (79 aa). Residues Cys-152, Cys-155, Cys-169, Cys-172, Cys-191, Cys-194, Cys-205, and Cys-208 each contribute to the Zn(2+) site. CXXCXGXG motif repeat units lie at residues 152–159, 169–176, 191–198, and 205–212; these read CDACDGKG, CPTCKGHG, CPRCGGSG, and CRKCGGRG. Residues 230–249 are disordered; sequence TGDRIRLSGEGEPGENGGPP.

Belongs to the DnaJ family. Homodimer. Requires Zn(2+) as cofactor.

It localises to the cytoplasm. Functionally, participates actively in the response to hyperosmotic and heat shock by preventing the aggregation of stress-denatured proteins and by disaggregating proteins, also in an autonomous, DnaK-independent fashion. Unfolded proteins bind initially to DnaJ; upon interaction with the DnaJ-bound protein, DnaK hydrolyzes its bound ATP, resulting in the formation of a stable complex. GrpE releases ADP from DnaK; ATP binding to DnaK triggers the release of the substrate protein, thus completing the reaction cycle. Several rounds of ATP-dependent interactions between DnaJ, DnaK and GrpE are required for fully efficient folding. Also involved, together with DnaK and GrpE, in the DNA replication of plasmids through activation of initiation proteins. This is Chaperone protein DnaJ from Alkalilimnicola ehrlichii (strain ATCC BAA-1101 / DSM 17681 / MLHE-1).